We begin with the raw amino-acid sequence, 326 residues long: 4-hydroxy-3-methylbut-2-enyl diphosphate reductase 1 (326 aa).

Cys27 contacts [4Fe-4S] cluster. The (2E)-4-hydroxy-3-methylbut-2-enyl diphosphate site is built by His56 and His89. His56 and His89 together coordinate dimethylallyl diphosphate. The isopentenyl diphosphate site is built by His56 and His89. Cys111 lines the [4Fe-4S] cluster pocket. Position 139 (His139) interacts with (2E)-4-hydroxy-3-methylbut-2-enyl diphosphate. Residue His139 participates in dimethylallyl diphosphate binding. Position 139 (His139) interacts with isopentenyl diphosphate. The active-site Proton donor is the Glu141. (2E)-4-hydroxy-3-methylbut-2-enyl diphosphate is bound at residue Thr179. Cys209 provides a ligand contact to [4Fe-4S] cluster. Positions 237, 238, 239, and 281 each coordinate (2E)-4-hydroxy-3-methylbut-2-enyl diphosphate. Ser237, Ser238, Asn239, and Ser281 together coordinate dimethylallyl diphosphate. Positions 237, 238, 239, and 281 each coordinate isopentenyl diphosphate.

This sequence belongs to the IspH family. [4Fe-4S] cluster is required as a cofactor.

It catalyses the reaction isopentenyl diphosphate + 2 oxidized [2Fe-2S]-[ferredoxin] + H2O = (2E)-4-hydroxy-3-methylbut-2-enyl diphosphate + 2 reduced [2Fe-2S]-[ferredoxin] + 2 H(+). The enzyme catalyses dimethylallyl diphosphate + 2 oxidized [2Fe-2S]-[ferredoxin] + H2O = (2E)-4-hydroxy-3-methylbut-2-enyl diphosphate + 2 reduced [2Fe-2S]-[ferredoxin] + 2 H(+). It functions in the pathway isoprenoid biosynthesis; dimethylallyl diphosphate biosynthesis; dimethylallyl diphosphate from (2E)-4-hydroxy-3-methylbutenyl diphosphate: step 1/1. It participates in isoprenoid biosynthesis; isopentenyl diphosphate biosynthesis via DXP pathway; isopentenyl diphosphate from 1-deoxy-D-xylulose 5-phosphate: step 6/6. In terms of biological role, catalyzes the conversion of 1-hydroxy-2-methyl-2-(E)-butenyl 4-diphosphate (HMBPP) into a mixture of isopentenyl diphosphate (IPP) and dimethylallyl diphosphate (DMAPP). Acts in the terminal step of the DOXP/MEP pathway for isoprenoid precursor biosynthesis. The polypeptide is 4-hydroxy-3-methylbut-2-enyl diphosphate reductase 1 (Burkholderia pseudomallei (strain K96243)).